Consider the following 1308-residue polypeptide: Cadherin-related family member 2 (1308 aa).

The N-terminal stretch at Met-1–Ala-20 is a signal peptide. Residues Asn-21–Ser-1152 are Extracellular-facing. Cadherin domains follow at residues Val-33 to Phe-124, Leu-125 to Phe-241, Ile-242 to Phe-353, Ala-368 to Phe-480, Ser-481 to Val-586, Val-586 to Phe-695, Phe-695 to Leu-807, Ala-809 to Phe-927, and Pro-929 to Phe-1051. A helical membrane pass occupies residues Val-1153–Val-1173. Residues Cys-1174–Leu-1308 lie on the Cytoplasmic side of the membrane. The segment at Ser-1178–Leu-1308 is mediates interaction with USH1C and MYO7B and is required for proper localization to microvilli tips and function in microvilli organization. Ser-1245 carries the post-translational modification Phosphoserine. The tract at residues Val-1251–Leu-1308 is disordered. Residues Met-1255 to Pro-1266 show a composition bias toward basic and acidic residues. Over residues Ala-1288–Leu-1308 the composition is skewed to polar residues. A Phosphoserine modification is found at Ser-1297.

Part of the IMAC/intermicrovillar adhesion complex/intermicrovillar tip-link complex composed of ANKS4B, MYO7B, USH1C, CDHR2 and CDHR5. Interacts with MAST2. Interacts (via cytoplasmic domain) with USH1C and MYO7B; required for proper localization of CDHR2 to microvilli tips and its function in brush border differentiation.

The protein localises to the apical cell membrane. It is found in the cell projection. Its subcellular location is the microvillus membrane. The protein resides in the cell junction. In terms of biological role, intermicrovillar adhesion molecule that forms, via its extracellular domain, calcium-dependent heterophilic complexes with CDHR5 on adjacent microvilli. Thereby, controls the packing of microvilli at the apical membrane of epithelial cells. Through its cytoplasmic domain, interacts with microvillus cytoplasmic proteins to form the intermicrovillar adhesion complex/IMAC. This complex plays a central role in microvilli and epithelial brush border differentiation. May also play a role in cell-cell adhesion and contact inhibition in epithelial cells. This is Cadherin-related family member 2 from Mus musculus (Mouse).